Consider the following 220-residue polypeptide: Large ribosomal subunit protein uL3 (220 aa).

Positions 113–143 (GTTKGHGYQGNIHKDGQRRGPMAHGSRYHRR) are disordered.

The protein belongs to the universal ribosomal protein uL3 family. As to quaternary structure, part of the 50S ribosomal subunit. Forms a cluster with proteins L14 and L19.

Its function is as follows. One of the primary rRNA binding proteins, it binds directly near the 3'-end of the 23S rRNA, where it nucleates assembly of the 50S subunit. The chain is Large ribosomal subunit protein uL3 from Limosilactobacillus fermentum (strain NBRC 3956 / LMG 18251) (Lactobacillus fermentum).